We begin with the raw amino-acid sequence, 197 residues long: dCTP deaminase, dUMP-forming (197 aa).

DCTP-binding positions include 105 to 110 (RSSIGR), D123, 131 to 133 (TLE), Q152, Y166, K174, and Q178. E133 (proton donor/acceptor) is an active-site residue. Residues 161 to 183 (PAERPYGHPSRDSKYIGQTRPQT) are disordered. Over residues 165–174 (PYGHPSRDSK) the composition is skewed to basic and acidic residues.

Belongs to the dCTP deaminase family. In terms of assembly, homotrimer.

It carries out the reaction dCTP + 2 H2O = dUMP + NH4(+) + diphosphate. Its pathway is pyrimidine metabolism; dUMP biosynthesis; dUMP from dCTP: step 1/1. In terms of biological role, bifunctional enzyme that catalyzes both the deamination of dCTP to dUTP and the hydrolysis of dUTP to dUMP without releasing the toxic dUTP intermediate. This Methanothermobacter thermautotrophicus (strain ATCC 29096 / DSM 1053 / JCM 10044 / NBRC 100330 / Delta H) (Methanobacterium thermoautotrophicum) protein is dCTP deaminase, dUMP-forming.